We begin with the raw amino-acid sequence, 60 residues long: Large ribosomal subunit protein uL30 (60 aa).

The protein belongs to the universal ribosomal protein uL30 family. Part of the 50S ribosomal subunit.

This is Large ribosomal subunit protein uL30 from Thermus thermophilus (strain ATCC BAA-163 / DSM 7039 / HB27).